Consider the following 886-residue polypeptide: Cytosolic carboxypeptidase-like protein 5 (886 aa).

The Peptidase M14 domain occupies 157–570 (YPFSYSDCQD…AMAIAALDMA (414 aa)). Residues H252 and E255 each coordinate Zn(2+). The segment covering 344 to 353 (AKSPTNQQPT) has biased composition (polar residues). Disordered regions lie at residues 344-363 (AKSP…APLS) and 374-401 (EAHL…KTDP). Residue H434 participates in Zn(2+) binding. The active-site Proton donor/acceptor is the E516. Disordered regions lie at residues 602–737 (GLTS…RNMG) and 783–846 (TRLQ…PAFS). Over residues 621-635 (PKSNNSLPVSCSENA) the composition is skewed to polar residues. Low complexity predominate over residues 643–654 (STGTSTGGSSSS). Positions 655–666 (QQNSPQMKNSPS) are enriched in polar residues. Residues 714 to 737 (STTSSLAPSPTLASSGPTSSRNMG) are compositionally biased toward low complexity. Over residues 805–815 (SSPTSPIPQTR) the composition is skewed to polar residues. Phosphoserine is present on S841.

Belongs to the peptidase M14 family. The cofactor is Zn(2+). Widely expressed. Highly expressed in testis, and moderately in pituitary, brain, eye and kidney.

Its subcellular location is the cytoplasm. It localises to the cytosol. It is found in the nucleus. The protein localises to the cytoskeleton. The protein resides in the spindle. Its subcellular location is the midbody. The catalysed reaction is gamma-L-glutamyl-L-glutamyl-[protein] + H2O = L-glutamyl-[protein] + L-glutamate. It catalyses the reaction (L-glutamyl)(n+1)-gamma-L-glutamyl-L-glutamyl-[protein] + H2O = (L-glutamyl)(n)-gamma-L-glutamyl-L-glutamyl-[protein] + L-glutamate. The enzyme catalyses C-terminal L-alpha-aminoacyl-L-glutamyl-[tubulin] + H2O = C-terminal L-alpha-aminoacyl-[tubulin] + L-glutamate. It carries out the reaction C-terminal L-alpha-aminoacyl-L-glutamyl-L-glutamyl-[tubulin] + H2O = C-terminal L-alpha-aminoacyl-L-glutamyl-[tubulin] + L-glutamate. Metallocarboxypeptidase that mediates deglutamylation of tubulin and non-tubulin target proteins. Catalyzes the removal of polyglutamate side chains present on the gamma-carboxyl group of glutamate residues within the C-terminal tail of alpha- and beta-tubulin. Cleaves alpha- and gamma-linked polyglutamate tubulin side-chain, as well as the branching point glutamate. Also catalyzes the removal of alpha-linked glutamate residues from the carboxy-terminus of alpha-tubulin. Mediates deglutamylation of nucleotidyltransferase CGAS, leading to CGAS antiviral defense response activation. This chain is Cytosolic carboxypeptidase-like protein 5, found in Mus musculus (Mouse).